The primary structure comprises 125 residues: Small ribosomal subunit protein uS12 (125 aa).

Position 89 is a 3-methylthioaspartic acid (D89).

It belongs to the universal ribosomal protein uS12 family. As to quaternary structure, part of the 30S ribosomal subunit. Contacts proteins S8 and S17. May interact with IF1 in the 30S initiation complex.

In terms of biological role, with S4 and S5 plays an important role in translational accuracy. Its function is as follows. Interacts with and stabilizes bases of the 16S rRNA that are involved in tRNA selection in the A site and with the mRNA backbone. Located at the interface of the 30S and 50S subunits, it traverses the body of the 30S subunit contacting proteins on the other side and probably holding the rRNA structure together. The combined cluster of proteins S8, S12 and S17 appears to hold together the shoulder and platform of the 30S subunit. This Clostridium novyi (strain NT) protein is Small ribosomal subunit protein uS12.